We begin with the raw amino-acid sequence, 444 residues long: Na(+)/H(+) antiporter NhaA (444 aa).

A run of 11 helical transmembrane segments spans residues 27–47, 72–92, 108–128, 136–156, 167–187, 190–210, 212–232, 312–332, 349–369, 385–405, and 419–439; these read TTGL…NSPL, IHHW…GLEI, MLPI…YYAI, AGWG…LVLL, FLVA…ALFY, EINM…VSFN, FGIH…LFML, HLPV…GVSI, VMAG…YLAI, VFGV…IAEL, and IGIL…LRFI.

This sequence belongs to the NhaA Na(+)/H(+) (TC 2.A.33) antiporter family.

It localises to the cell inner membrane. The catalysed reaction is Na(+)(in) + 2 H(+)(out) = Na(+)(out) + 2 H(+)(in). In terms of biological role, na(+)/H(+) antiporter that extrudes sodium in exchange for external protons. In Sulfurimonas denitrificans (strain ATCC 33889 / DSM 1251) (Thiomicrospira denitrificans (strain ATCC 33889 / DSM 1251)), this protein is Na(+)/H(+) antiporter NhaA.